The primary structure comprises 763 residues: 1,4-alpha-glucan branching enzyme GlgB (763 aa).

D437 serves as the catalytic Nucleophile. E488 (proton donor) is an active-site residue.

Belongs to the glycosyl hydrolase 13 family. GlgB subfamily. Monomer.

The catalysed reaction is Transfers a segment of a (1-&gt;4)-alpha-D-glucan chain to a primary hydroxy group in a similar glucan chain.. It participates in glycan biosynthesis; glycogen biosynthesis. Catalyzes the formation of the alpha-1,6-glucosidic linkages in glycogen by scission of a 1,4-alpha-linked oligosaccharide from growing alpha-1,4-glucan chains and the subsequent attachment of the oligosaccharide to the alpha-1,6 position. This Synechococcus sp. (strain JA-2-3B'a(2-13)) (Cyanobacteria bacterium Yellowstone B-Prime) protein is 1,4-alpha-glucan branching enzyme GlgB.